The primary structure comprises 128 residues: Fluoride-specific ion channel FluC (128 aa).

4 consecutive transmembrane segments (helical) span residues 5 to 25 (IVAI…LSIG), 35 to 55 (LGTL…VVAF), 67 to 87 (LFVI…SVEV), and 96 to 116 (FGWA…LTGL). Na(+) contacts are provided by Gly75 and Thr78.

It belongs to the fluoride channel Fluc/FEX (TC 1.A.43) family.

The protein localises to the cell inner membrane. It catalyses the reaction fluoride(in) = fluoride(out). Its activity is regulated as follows. Na(+) is not transported, but it plays an essential structural role and its presence is essential for fluoride channel function. Fluoride-specific ion channel. Important for reducing fluoride concentration in the cell, thus reducing its toxicity. This chain is Fluoride-specific ion channel FluC, found in Burkholderia pseudomallei (strain 1106a).